We begin with the raw amino-acid sequence, 422 residues long: Vitamin D3 receptor B (422 aa).

The segment at residues 20–95 (PRICGVCGDK…IGMMKEFILT (76 aa)) is a DNA-binding region (nuclear receptor). 8 residues coordinate Zn(2+): cysteine 23, cysteine 26, cysteine 40, cysteine 43, cysteine 59, cysteine 65, cysteine 75, and cysteine 78. 2 NR C4-type zinc fingers span residues 23–43 (CGVC…CEGC) and 59–78 (CPFN…CQAC). The tract at residues 96–125 (DEEVQRKKELIQRRKDEEAHREAQKPRLSD) is hinge. Positions 106 to 128 (IQRRKDEEAHREAQKPRLSDEQR) are disordered. The NR LBD domain occupies 126–418 (EQRNIIDTLV…LTPLVLEVFG (293 aa)). Tyrosine 142 is a calcitriol binding site. The interval 145-190 (SYSDFSRFRPPVREGPVTRSASRAASLHSLSDASSDSFSHSPESGD) is disordered. Residues 163 to 185 (RSASRAASLHSLSDASSDSFSHS) show a composition bias toward low complexity. Serine 234 lines the calcitriol pocket. Residues 243–261 (KMIPGFRELTAEDQIALLK) are interaction with coactivator LXXLL motif. Calcitriol-binding residues include arginine 271, serine 275, histidine 302, and histidine 392. Positions 411–419 (PLVLEVFGG) match the 9aaTAD motif.

This sequence belongs to the nuclear hormone receptor family. In terms of assembly, homodimer in the absence of bound vitamin D3. Heterodimer with RXRA after vitamin D3 binding. Interacts with ncoa1 and possibly other coactivators, leading to a strong increase of transcription of target genes. Detected in embryo 24 to 48 hours after fertilization, and in intestinal bulb.

It is found in the nucleus. The protein resides in the cytoplasm. Functionally, nuclear receptor for calcitriol, the active form of vitamin D3 which mediates the action of this vitamin on cells. Enters the nucleus upon vitamin D3 binding where it forms heterodimers with the retinoid X receptor/RXR. The VDR-RXR heterodimers bind to specific response elements on DNA and activate the transcription of vitamin D3-responsive target genes. Recruited to promoters via its interaction with BAZ1B/WSTF which mediates the interaction with acetylated histones, an essential step for VDR-promoter association. Plays a central role in calcium homeostasis. The polypeptide is Vitamin D3 receptor B (vdrb) (Danio rerio (Zebrafish)).